Here is a 313-residue protein sequence, read N- to C-terminus: Protein PHOSPHATE-INDUCED 1 (313 aa).

Positions 1 to 22 (MATSHFILKLFLVISFCNVCFA) are cleaved as a signal peptide. Asn-119 is a glycosylation site (N-linked (GlcNAc...) asparagine).

This sequence belongs to the EXORDIUM family.

The protein localises to the secreted. The protein resides in the extracellular space. It is found in the apoplast. Its function is as follows. May be involved in the regulation of cell division. This is Protein PHOSPHATE-INDUCED 1 from Nicotiana tabacum (Common tobacco).